The following is a 536-amino-acid chain: Inactive phospholipase D5 (536 aa).

A helical transmembrane segment spans residues 69 to 89 (IVIFALVCCFAILVALIFSAV). An N-linked (GlcNAc...) asparagine glycan is attached at N121. Residues 215–242 (NKGRLQSSFWIVDKQHVYIGSAGLDWQS) enclose the PLD phosphodiesterase 1 domain. N-linked (GlcNAc...) asparagine glycosylation occurs at N302. Residues 434–460 (FPRLNRNKYMVTDGAAYIGNFDWVGND) form the PLD phosphodiesterase 2 domain.

The protein belongs to the phospholipase D family.

It is found in the membrane. In Homo sapiens (Human), this protein is Inactive phospholipase D5 (PLD5).